The following is a 409-amino-acid chain: Probable beta-1,3-galactosyltransferase 3 (409 aa).

Residues 20-42 (WTFLLCFGSFCFGILFTDRMWII) traverse the membrane as a helical; Signal-anchor for type II membrane protein segment.

It belongs to the glycosyltransferase 31 family. It depends on Mn(2+) as a cofactor.

It is found in the golgi apparatus membrane. The protein operates within protein modification; protein glycosylation. Beta-1,3-galactosyltransferase that transfers galactose from UDP-galactose to substrates with a terminal glycosyl residue. The protein is Probable beta-1,3-galactosyltransferase 3 (B3GALT3) of Arabidopsis thaliana (Mouse-ear cress).